A 131-amino-acid polypeptide reads, in one-letter code: Large ribosomal subunit protein bL12 (131 aa).

The protein belongs to the bacterial ribosomal protein bL12 family. Homodimer. Part of the ribosomal stalk of the 50S ribosomal subunit. Forms a multimeric L10(L12)X complex, where L10 forms an elongated spine to which 2 to 4 L12 dimers bind in a sequential fashion. Binds GTP-bound translation factors.

Its function is as follows. Forms part of the ribosomal stalk which helps the ribosome interact with GTP-bound translation factors. Is thus essential for accurate translation. The protein is Large ribosomal subunit protein bL12 of Nocardioides sp. (strain ATCC BAA-499 / JS614).